Reading from the N-terminus, the 132-residue chain is ATP synthase epsilon chain, chloroplastic (132 aa).

Belongs to the ATPase epsilon chain family. As to quaternary structure, F-type ATPases have 2 components, CF(1) - the catalytic core - and CF(0) - the membrane proton channel. CF(1) has five subunits: alpha(3), beta(3), gamma(1), delta(1), epsilon(1). CF(0) has three main subunits: a, b and c.

Its subcellular location is the plastid. The protein localises to the chloroplast thylakoid membrane. Functionally, produces ATP from ADP in the presence of a proton gradient across the membrane. In Adiantum capillus-veneris (Maidenhair fern), this protein is ATP synthase epsilon chain, chloroplastic.